The primary structure comprises 348 residues: tRNA N6-adenosine threonylcarbamoyltransferase (348 aa).

His-115 and His-119 together coordinate Fe cation. Residues 138–142, Asp-171, Gly-184, and Asn-276 each bind substrate; that span reads LVSGG. Asp-304 lines the Fe cation pocket.

The protein belongs to the KAE1 / TsaD family. Fe(2+) is required as a cofactor.

Its subcellular location is the cytoplasm. It catalyses the reaction L-threonylcarbamoyladenylate + adenosine(37) in tRNA = N(6)-L-threonylcarbamoyladenosine(37) in tRNA + AMP + H(+). Its function is as follows. Required for the formation of a threonylcarbamoyl group on adenosine at position 37 (t(6)A37) in tRNAs that read codons beginning with adenine. Is involved in the transfer of the threonylcarbamoyl moiety of threonylcarbamoyl-AMP (TC-AMP) to the N6 group of A37, together with TsaE and TsaB. TsaD likely plays a direct catalytic role in this reaction. This Xylella fastidiosa (strain M23) protein is tRNA N6-adenosine threonylcarbamoyltransferase.